A 101-amino-acid chain; its full sequence is Phosphoribosyl-AMP cyclohydrolase (101 aa).

Asp71 lines the Mg(2+) pocket. Cys72 is a binding site for Zn(2+). 2 residues coordinate Mg(2+): Asp73 and Asp75. Positions 88 and 95 each coordinate Zn(2+).

It belongs to the PRA-CH family. In terms of assembly, homodimer. The cofactor is Mg(2+). Zn(2+) serves as cofactor.

It localises to the cytoplasm. It carries out the reaction 1-(5-phospho-beta-D-ribosyl)-5'-AMP + H2O = 1-(5-phospho-beta-D-ribosyl)-5-[(5-phospho-beta-D-ribosylamino)methylideneamino]imidazole-4-carboxamide. Its pathway is amino-acid biosynthesis; L-histidine biosynthesis; L-histidine from 5-phospho-alpha-D-ribose 1-diphosphate: step 3/9. Its function is as follows. Catalyzes the hydrolysis of the adenine ring of phosphoribosyl-AMP. The sequence is that of Phosphoribosyl-AMP cyclohydrolase from Bacillus cereus (strain G9842).